We begin with the raw amino-acid sequence, 288 residues long: Allergen Asp f 7 homolog (288 aa).

A signal peptide spans 1–20 (MAPQFLKALTVATALGATLA). Low complexity-rich tracts occupy residues 48–107 (TVHG…SSSV) and 117–129 (TTST…TTST). The disordered stretch occupies residues 48 to 161 (TVHGTPGPDY…PPVVSIPPIG (114 aa)). Residues 130–151 (TPPPPPPAMTTPPPPPPPPATK) are compositionally biased toward pro residues. N-linked (GlcNAc...) asparagine glycosylation occurs at Asn268.

It localises to the secreted. The polypeptide is Allergen Asp f 7 homolog (Arthroderma benhamiae (strain ATCC MYA-4681 / CBS 112371) (Trichophyton mentagrophytes)).